A 223-amino-acid chain; its full sequence is RNA-free ribonuclease P (223 aa).

It belongs to the HARP family.

The enzyme catalyses Endonucleolytic cleavage of RNA, removing 5'-extranucleotides from tRNA precursor.. Functionally, RNA-free RNase P that catalyzes the removal of the 5'-leader sequence from pre-tRNA to produce the mature 5'-terminus. The sequence is that of RNA-free ribonuclease P from Methanococcus maripaludis (strain C5 / ATCC BAA-1333).